The sequence spans 456 residues: MADGGSERADGRIVKMEVDYSATVDQRLPECEKLAKEGRLQEVIETLLSLEKQTRTASDMVSTSRILVAIVKMCYEAKEWDLLNENIMLLSKRRSQLKQAVAKMVQQCCTYVEEITDLPIKLRLIDTLRMVTEGKIYVEIERARLTKTLATIKEQNGDVKEAASILQELQVETYGSMEKKERVEFILEQMRLCLAVKDYIRTQIISKKINTKFFQEENTEKLKLKYYNLMIQLDQHEGSYLSICKHYRAIYDTPCIQAESEKWQQALKSVVLYVILAPFDNEQSDLVHRISGDKKLEEIPKYKDLLKLFTTMELMRWSTLVEDYGMELRKGSLESPATDVFGYTEEGEKRWKDLKNRVVEHNIRIMAKYYTRITMKRMAQLLDLSVDESEAFLSNLVVNKTIFAKVDRLAGIINFQRPKDPNNLLNDWSQKLNSLMSLVNKTTHLIAKEEMIHNLQ.

At Ala-2 the chain carries N-acetylalanine. Lys-92 participates in a covalent cross-link: Glycyl lysine isopeptide (Lys-Gly) (interchain with G-Cter in SUMO1); alternate. Lys-92 is covalently cross-linked (Glycyl lysine isopeptide (Lys-Gly) (interchain with G-Cter in SUMO2); alternate). An N6-acetyllysine mark is found at Lys-221 and Lys-368. A PCI domain is found at 242-420 (SICKHYRAIY…GIINFQRPKD (179 aa)).

This sequence belongs to the proteasome subunit p55 family. In terms of assembly, component of the 19S proteasome regulatory particle complex. The 26S proteasome consists of a 20S core particle (CP) and two 19S regulatory subunits (RP). The regulatory particle is made of a lid composed of 9 subunits including PSMD12, a base containing 6 ATPases and few additional components. Interacts with ERCC6.

Functionally, component of the 26S proteasome, a multiprotein complex involved in the ATP-dependent degradation of ubiquitinated proteins. This complex plays a key role in the maintenance of protein homeostasis by removing misfolded or damaged proteins, which could impair cellular functions, and by removing proteins whose functions are no longer required. Therefore, the proteasome participates in numerous cellular processes, including cell cycle progression, apoptosis, or DNA damage repair. The polypeptide is 26S proteasome non-ATPase regulatory subunit 12 (PSMD12) (Bos taurus (Bovine)).